The following is a 201-amino-acid chain: Transmembrane 4 L6 family member 18 (201 aa).

Over 1 to 9 (MGSRKCGGC) the chain is Cytoplasmic. Residues 10-30 (LSCLLIPLALWSIIVNILLYF) traverse the membrane as a helical segment. The Extracellular portion of the chain corresponds to 31–49 (PNGQTSYASSNKLTNYVWY). Residues 50–70 (FEGICFSGIMMLIVTTVLLVL) traverse the membrane as a helical segment. Topologically, residues 71–93 (ENNNNYKCCQSENCSKKYVTLLS) are cytoplasmic. A helical transmembrane segment spans residues 94-114 (IIFSSLGIAFSGYCLVISALG). Over 115 to 157 (LVQGPYCRTLDGWEYAFEGTAGRFLTDSSIWIQCLEPAHVVEW) the chain is Extracellular. The chain crosses the membrane as a helical span at residues 158-178 (NIILFSILITLSGLQVIICLI). At 179-201 (RVVMQLSKILCGSYSVIFQPGII) the chain is on the cytoplasmic side.

This sequence belongs to the L6 tetraspanin family.

The protein localises to the membrane. The chain is Transmembrane 4 L6 family member 18 (TM4SF18) from Homo sapiens (Human).